A 1430-amino-acid chain; its full sequence is Gag-Pol polyprotein (1430 aa).

The N-myristoyl glycine; by host moiety is linked to residue Gly-2. The segment at 7-31 (VLSGGKLDAWEKIRLRPGGKKKYKL) is interaction with Gp41. The interval 8-43 (LSGGKLDAWEKIRLRPGGKKKYKLKHLVWASRELER) is interaction with host CALM1. Residues 12 to 19 (KLDAWEKI) are interaction with host AP3D1. The segment at 14–33 (DAWEKIRLRPGGKKKYKLKH) is interaction with membrane phosphatidylinositol 4,5-bisphosphate and RNA. The short motif at 16-22 (WEKIRLR) is the Nuclear export signal element. The Nuclear localization signal signature appears at 26-32 (KKKYKLK). Residues 73–77 (EEIKS) are interaction with membrane phosphatidylinositol 4,5-bisphosphate. The residue at position 128 (Tyr-128) is a Phosphotyrosine; by host. Residues 185–223 (NTVGGHQAAMQMLKDTINDEAAEWDRLHPVHAGPIPPGQ) are interaction with human PPIA/CYPA and NUP153. The tract at residues 273-359 (YSPVSILDIR…GGPSHKARIL (87 aa)) is dimerization/Multimerization of capsid protein p24. 2 CCHC-type zinc fingers span residues 385-402 (VKCF…NCRA) and 406-423 (KGCW…DCTE). Residues 439 to 480 (EAREFSSEQTRANSPTSRELRVRGGDNPLSEAGDQRQGTEPS) are disordered. Positions 445 to 455 (SEQTRANSPTS) are enriched in polar residues. The tract at residues 484–488 (PQITL) is dimerization of protease. One can recognise a Peptidase A2 domain in the interval 503–572 (REALLDTGAD…TPVNIIGRNL (70 aa)). The active-site For protease activity; shared with dimeric partner is Asp-508. Dimerization of protease regions lie at residues 532-538 (GIGGFIK) and 571-583 (NLLT…LNFP). The Reverse transcriptase domain maps to 626–816 (EGKISKIGPE…PPFLWMGYEL (191 aa)). Residues Asp-692, Asp-767, and Asp-768 each coordinate Mg(2+). Residues 809–817 (FLWMGYELH) are RT 'primer grip'. The Tryptophan repeat motif signature appears at 980–996 (WETWWTEYWQATWIPEW). Residues 1016–1139 (IVGAETFYVD…VDKLVSAGIR (124 aa)) form the RNase H type-1 domain. Mg(2+) contacts are provided by Asp-1025, Glu-1060, Asp-1080, and Asp-1131. Residues 1145 to 1186 (DGIDKAQEEHEKYHNNWRAMASDFNLPPIVAKEIVASCDKCQ) form an Integrase-type zinc finger. Residues His-1154, His-1158, Cys-1182, and Cys-1185 each contribute to the Zn(2+) site. Residues 1196–1346 (VDCSPGIWQL…SAGERIVDII (151 aa)) form the Integrase catalytic domain. Residues Asp-1206, Asp-1258, and Glu-1294 each contribute to the Mg(2+) site. A DNA-binding region (integrase-type) is located at residues 1365–1412 (FRVYYRDSREPIWKGPAKLLWKGEGAVVIQDNSEIKVVPRRKAKIIRD).

As to quaternary structure, homotrimer; further assembles as hexamers of trimers. Interacts with gp41 (via C-terminus). Interacts with host CALM1; this interaction induces a conformational change in the Matrix protein, triggering exposure of the myristate group. Interacts with host AP3D1; this interaction allows the polyprotein trafficking to multivesicular bodies during virus assembly. Part of the pre-integration complex (PIC) which is composed of viral genome, matrix protein, Vpr and integrase. In terms of assembly, homodimer; the homodimer further multimerizes as homohexamers or homopentamers. Interacts with human PPIA/CYPA; This interaction stabilizes the capsid. Interacts with human NUP153. Interacts with host PDZD8; this interaction stabilizes the capsid. Interacts with monkey TRIM5; this interaction destabilizes the capsid. Homodimer, whose active site consists of two apposed aspartic acid residues. As to quaternary structure, heterodimer of p66 RT and p51 RT (RT p66/p51). Heterodimerization of RT is essential for DNA polymerase activity. The overall folding of the subdomains is similar in p66 RT and p51 RT but the spatial arrangements of the subdomains are dramatically different. In terms of assembly, homotetramer; may further associate as a homohexadecamer. Part of the pre-integration complex (PIC) which is composed of viral genome, matrix protein, Vpr and integrase. Interacts with human SMARCB1/INI1 and human PSIP1/LEDGF isoform 1. Interacts with human KPNA3; this interaction might play a role in nuclear import of the pre-integration complex. Interacts with human NUP153; this interaction might play a role in nuclear import of the pre-integration complex. The cofactor is Mg(2+). Specific enzymatic cleavages by the viral protease yield mature proteins. The protease is released by autocatalytic cleavage. The polyprotein is cleaved during and after budding, this process is termed maturation. Proteolytic cleavage of p66 RT removes the RNase H domain to yield the p51 RT subunit. Nucleocapsid protein p7 might be further cleaved after virus entry. Post-translationally, tyrosine phosphorylated presumably in the virion by a host kinase. Phosphorylation is apparently not a major regulator of membrane association. In terms of processing, phosphorylated possibly by host MAPK1; this phosphorylation is necessary for Pin1-mediated virion uncoating. Methylated by host PRMT6, impairing its function by reducing RNA annealing and the initiation of reverse transcription.

It localises to the host cell membrane. It is found in the host endosome. The protein resides in the host multivesicular body. Its subcellular location is the virion membrane. The protein localises to the host nucleus. It localises to the host cytoplasm. It is found in the virion. The catalysed reaction is Specific for a P1 residue that is hydrophobic, and P1' variable, but often Pro.. It carries out the reaction Endohydrolysis of RNA in RNA/DNA hybrids. Three different cleavage modes: 1. sequence-specific internal cleavage of RNA. Human immunodeficiency virus type 1 and Moloney murine leukemia virus enzymes prefer to cleave the RNA strand one nucleotide away from the RNA-DNA junction. 2. RNA 5'-end directed cleavage 13-19 nucleotides from the RNA end. 3. DNA 3'-end directed cleavage 15-20 nucleotides away from the primer terminus.. The enzyme catalyses 3'-end directed exonucleolytic cleavage of viral RNA-DNA hybrid.. It catalyses the reaction DNA(n) + a 2'-deoxyribonucleoside 5'-triphosphate = DNA(n+1) + diphosphate. Protease: The viral protease is inhibited by many synthetic protease inhibitors (PIs), such as amprenavir, atazanavir, indinavir, loprinavir, nelfinavir, ritonavir and saquinavir. Use of protease inhibitors in tritherapy regimens permit more ambitious therapeutic strategies. Reverse transcriptase/ribonuclease H: RT can be inhibited either by nucleoside RT inhibitors (NRTIs) or by non nucleoside RT inhibitors (NNRTIs). NRTIs act as chain terminators, whereas NNRTIs inhibit DNA polymerization by binding a small hydrophobic pocket near the RT active site and inducing an allosteric change in this region. Classical NRTIs are abacavir, adefovir (PMEA), didanosine (ddI), lamivudine (3TC), stavudine (d4T), tenofovir (PMPA), zalcitabine (ddC), and zidovudine (AZT). Classical NNRTIs are atevirdine (BHAP U-87201E), delavirdine, efavirenz (DMP-266), emivirine (I-EBU), and nevirapine (BI-RG-587). The tritherapies used as a basic effective treatment of AIDS associate two NRTIs and one NNRTI. In terms of biological role, mediates, with Gag polyprotein, the essential events in virion assembly, including binding the plasma membrane, making the protein-protein interactions necessary to create spherical particles, recruiting the viral Env proteins, and packaging the genomic RNA via direct interactions with the RNA packaging sequence (Psi). Gag-Pol polyprotein may regulate its own translation, by the binding genomic RNA in the 5'-UTR. At low concentration, the polyprotein would promote translation, whereas at high concentration, the polyprotein would encapsidate genomic RNA and then shut off translation. Functionally, targets the polyprotein to the plasma membrane via a multipartite membrane-binding signal, that includes its myristoylated N-terminus. Matrix protein is part of the pre-integration complex. Implicated in the release from host cell mediated by Vpu. Binds to RNA. Its function is as follows. Forms the conical core that encapsulates the genomic RNA-nucleocapsid complex in the virion. Most core are conical, with only 7% tubular. The core is constituted by capsid protein hexamer subunits. The core is disassembled soon after virion entry. Host restriction factors such as TRIM5-alpha or TRIMCyp bind retroviral capsids and cause premature capsid disassembly, leading to blocks in reverse transcription. Capsid restriction by TRIM5 is one of the factors which restricts HIV-1 to the human species. Host PIN1 apparently facilitates the virion uncoating. On the other hand, interactions with PDZD8 or CYPA stabilize the capsid. Encapsulates and protects viral dimeric unspliced genomic RNA (gRNA). Binds these RNAs through its zinc fingers. Acts as a nucleic acid chaperone which is involved in rearangement of nucleic acid secondary structure during gRNA retrotranscription. Also facilitates template switch leading to recombination. As part of the polyprotein, participates in gRNA dimerization, packaging, tRNA incorporation and virion assembly. In terms of biological role, aspartyl protease that mediates proteolytic cleavages of Gag and Gag-Pol polyproteins during or shortly after the release of the virion from the plasma membrane. Cleavages take place as an ordered, step-wise cascade to yield mature proteins. This process is called maturation. Displays maximal activity during the budding process just prior to particle release from the cell. Also cleaves Nef and Vif, probably concomitantly with viral structural proteins on maturation of virus particles. Hydrolyzes host EIF4GI and PABP1 in order to shut off the capped cellular mRNA translation. The resulting inhibition of cellular protein synthesis serves to ensure maximal viral gene expression and to evade host immune response. Also mediates cleavage of host YTHDF3. Mediates cleavage of host CARD8, thereby activating the CARD8 inflammasome, leading to the clearance of latent HIV-1 in patient CD4(+) T-cells after viral reactivation; in contrast, HIV-1 can evade CARD8-sensing when its protease remains inactive in infected cells prior to viral budding. Functionally, multifunctional enzyme that converts the viral RNA genome into dsDNA in the cytoplasm, shortly after virus entry into the cell. This enzyme displays a DNA polymerase activity that can copy either DNA or RNA templates, and a ribonuclease H (RNase H) activity that cleaves the RNA strand of RNA-DNA heteroduplexes in a partially processive 3' to 5' endonucleasic mode. Conversion of viral genomic RNA into dsDNA requires many steps. A tRNA(3)-Lys binds to the primer-binding site (PBS) situated at the 5'-end of the viral RNA. RT uses the 3' end of the tRNA primer to perform a short round of RNA-dependent minus-strand DNA synthesis. The reading proceeds through the U5 region and ends after the repeated (R) region which is present at both ends of viral RNA. The portion of the RNA-DNA heteroduplex is digested by the RNase H, resulting in a ssDNA product attached to the tRNA primer. This ssDNA/tRNA hybridizes with the identical R region situated at the 3' end of viral RNA. This template exchange, known as minus-strand DNA strong stop transfer, can be either intra- or intermolecular. RT uses the 3' end of this newly synthesized short ssDNA to perform the RNA-dependent minus-strand DNA synthesis of the whole template. RNase H digests the RNA template except for two polypurine tracts (PPTs) situated at the 5'-end and near the center of the genome. It is not clear if both polymerase and RNase H activities are simultaneous. RNase H probably can proceed both in a polymerase-dependent (RNA cut into small fragments by the same RT performing DNA synthesis) and a polymerase-independent mode (cleavage of remaining RNA fragments by free RTs). Secondly, RT performs DNA-directed plus-strand DNA synthesis using the PPTs that have not been removed by RNase H as primers. PPTs and tRNA primers are then removed by RNase H. The 3' and 5' ssDNA PBS regions hybridize to form a circular dsDNA intermediate. Strand displacement synthesis by RT to the PBS and PPT ends produces a blunt ended, linear dsDNA copy of the viral genome that includes long terminal repeats (LTRs) at both ends. Its function is as follows. Catalyzes viral DNA integration into the host chromosome, by performing a series of DNA cutting and joining reactions. This enzyme activity takes place after virion entry into a cell and reverse transcription of the RNA genome in dsDNA. The first step in the integration process is 3' processing. This step requires a complex comprising the viral genome, matrix protein, Vpr and integrase. This complex is called the pre-integration complex (PIC). The integrase protein removes 2 nucleotides from each 3' end of the viral DNA, leaving recessed CA OH's at the 3' ends. In the second step, the PIC enters cell nucleus. This process is mediated through integrase and Vpr proteins, and allows the virus to infect a non dividing cell. This ability to enter the nucleus is specific of lentiviruses, other retroviruses cannot and rely on cell division to access cell chromosomes. In the third step, termed strand transfer, the integrase protein joins the previously processed 3' ends to the 5' ends of strands of target cellular DNA at the site of integration. The 5'-ends are produced by integrase-catalyzed staggered cuts, 5 bp apart. A Y-shaped, gapped, recombination intermediate results, with the 5'-ends of the viral DNA strands and the 3' ends of target DNA strands remaining unjoined, flanking a gap of 5 bp. The last step is viral DNA integration into host chromosome. This involves host DNA repair synthesis in which the 5 bp gaps between the unjoined strands are filled in and then ligated. Since this process occurs at both cuts flanking the HIV genome, a 5 bp duplication of host DNA is produced at the ends of HIV-1 integration. Alternatively, Integrase may catalyze the excision of viral DNA just after strand transfer, this is termed disintegration. The protein is Gag-Pol polyprotein (gag-pol) of Homo sapiens (Human).